The sequence spans 435 residues: Protoheme IX farnesyltransferase, mitochondrial (435 aa).

The N-terminal 35 residues, 1-35 (MPALCATYLIHSGNLRACLRIVPLTKPSVVIAYRH), are a transit peptide targeting the mitochondrion. Helical transmembrane passes span 135 to 155 (VLVMLSAICSYALSPYPATVL), 157 to 177 (LLSLTVGTTLCSAAANGINMG), 212 to 232 (GVIGTAILYAGVNPTVALLGA), 250 to 270 (IINTWFGAITGAIPPLMGWAA), 324 to 344 (VALRYSLLMFPLCFGLSYYGI), and 401 to 421 (FWVSVLHLPAVLILAIVHKKG).

The protein belongs to the UbiA prenyltransferase family.

Its subcellular location is the mitochondrion membrane. Converts protoheme IX and farnesyl diphosphate to heme O. This chain is Protoheme IX farnesyltransferase, mitochondrial (COX10), found in Eremothecium gossypii (strain ATCC 10895 / CBS 109.51 / FGSC 9923 / NRRL Y-1056) (Yeast).